The following is a 556-amino-acid chain: Formate--tetrahydrofolate ligase (556 aa).

65–72 serves as a coordination point for ATP; sequence TPAGEGKT.

Belongs to the formate--tetrahydrofolate ligase family.

The enzyme catalyses (6S)-5,6,7,8-tetrahydrofolate + formate + ATP = (6R)-10-formyltetrahydrofolate + ADP + phosphate. It participates in one-carbon metabolism; tetrahydrofolate interconversion. In Proteus mirabilis (strain HI4320), this protein is Formate--tetrahydrofolate ligase.